We begin with the raw amino-acid sequence, 195 residues long: Protein aq_1444 (195 aa).

Residues 1–191 (MDIRELVHLG…EKEPFGEVER (191 aa)) enclose the AMMECR1 domain.

The protein is Protein aq_1444 of Aquifex aeolicus (strain VF5).